We begin with the raw amino-acid sequence, 407 residues long: Lysophospholipid transporter LplT (407 aa).

11 helical membrane-spanning segments follow: residues 18 to 38, 53 to 73, 91 to 111, 139 to 159, 163 to 183, 229 to 249, 257 to 277, 286 to 306, 310 to 330, 343 to 365, and 375 to 395; these read AVIIAQFFSAFGDNALLFATL, FLQMGFVAAYIILAPFVGQIA, AGALLICVGGNPFLGYTLVGV, LMEASTIAAILTGSVAGGVLA, IYGALSICAVAYGIALGANML, WGAGVTLRFLLVLWVPHALGI, LLNAMVAVGIVVGAGAAAKLV, LPAGFLIGVVVVIFTLQHNLM, SLLILLGALGGFFIVPLNALL, AIAVQNLGENGAMLLMLGLYSLV, and IGIGFGVLFALAIALLWVWLI.

The protein belongs to the major facilitator superfamily. LplT (TC 2.A.1.42) family.

It is found in the cell inner membrane. In terms of biological role, catalyzes the facilitated diffusion of 2-acyl-glycero-3-phosphoethanolamine (2-acyl-GPE) into the cell. This Pectobacterium carotovorum subsp. carotovorum (strain PC1) protein is Lysophospholipid transporter LplT.